Here is a 1487-residue protein sequence, read N- to C-terminus: Probable lysine-specific demethylase SE14 (1487 aa).

The segment at 1–23 (MPPQPPPAASASASAPDPAVPAW) is disordered. Over residues 9–22 (ASASASAPDPAVPA) the composition is skewed to low complexity. The 42-residue stretch at 30 to 71 (APEYRPTESEFADPIAFLSRVEREAAAYGICKVIPPHPRPSR) folds into the JmjN domain. A compositionally biased stretch (low complexity) spans 86–104 (CDAPAPSPAAASDSSIPPS). The tract at residues 86-113 (CDAPAPSPAAASDSSIPPSSSSPPPVSA) is disordered. A JmjC domain is found at 232-398 (NSPWNLQAIA…FAKEAAVRRA (167 aa)). Residues histidine 275, glutamate 277, and histidine 366 each coordinate Fe cation. 2 disordered regions span residues 494–555 (SCSK…DDGD) and 684–718 (YGDT…PDVE). Composition is skewed to basic and acidic residues over residues 498–507 (APEKKGEDGP) and 542–551 (QAPEGEKLDT). The C2H2-type 1; degenerate zinc-finger motif lies at 1377–1400 (FQCDIEFCDMTFETKAELRAHQRN). C2H2-type zinc fingers lie at residues 1400 to 1424 (NICT…QCVH), 1430 to 1454 (FKCP…IRVH), and 1460 to 1486 (YKCS…KFNH).

Fe(2+) serves as cofactor.

It localises to the nucleus. Histone demethylase that demethylates 'Lys-4' (H3K4me) of histone H3. Involved in the control of flowering time. Has a suppressive effect on floral transition under long day conditions through the demethylation of H3K4me3 in the promoter region of the flower-promoting signal HD3B/RFT1. In Oryza sativa subsp. japonica (Rice), this protein is Probable lysine-specific demethylase SE14 (SE14).